The sequence spans 35 residues: Photosystem II reaction center protein T (35 aa).

The helical transmembrane segment at 3-23 threads the bilayer; the sequence is ALVYTFLLVGTLGIIFFAIFF.

It belongs to the PsbT family. PSII is composed of 1 copy each of membrane proteins PsbA, PsbB, PsbC, PsbD, PsbE, PsbF, PsbH, PsbI, PsbJ, PsbK, PsbL, PsbM, PsbT, PsbY, PsbZ, Psb30/Ycf12, at least 3 peripheral proteins of the oxygen-evolving complex and a large number of cofactors. It forms dimeric complexes.

It localises to the plastid. The protein resides in the chloroplast thylakoid membrane. Functionally, found at the monomer-monomer interface of the photosystem II (PS II) dimer, plays a role in assembly and dimerization of PSII. PSII is a light-driven water plastoquinone oxidoreductase, using light energy to abstract electrons from H(2)O, generating a proton gradient subsequently used for ATP formation. This Marchantia polymorpha (Common liverwort) protein is Photosystem II reaction center protein T.